A 70-amino-acid polypeptide reads, in one-letter code: ATP synthase subunit epsilon, mitochondrial (70 aa).

The protein belongs to the eukaryotic ATPase epsilon family. In terms of assembly, F-type ATPases have 2 components, CF(1) - the catalytic core - and CF(0) - the membrane proton channel. CF(1) has five subunits: alpha(3), beta(3), gamma(1), delta(1), epsilon(1). CF(0) has three main subunits: a, b and c.

It is found in the mitochondrion. The protein localises to the mitochondrion inner membrane. Its function is as follows. Mitochondrial membrane ATP synthase (F(1)F(0) ATP synthase or Complex V) produces ATP from ADP in the presence of a proton gradient across the membrane which is generated by electron transport complexes of the respiratory chain. F-type ATPases consist of two structural domains, F(1) - containing the extramembraneous catalytic core, and F(0) - containing the membrane proton channel, linked together by a central stalk and a peripheral stalk. During catalysis, ATP synthesis in the catalytic domain of F(1) is coupled via a rotary mechanism of the central stalk subunits to proton translocation. Part of the complex F(1) domain and of the central stalk which is part of the complex rotary element. Rotation of the central stalk against the surrounding alpha(3)beta(3) subunits leads to hydrolysis of ATP in three separate catalytic sites on the beta subunits. This is ATP synthase subunit epsilon, mitochondrial from Zea mays (Maize).